The chain runs to 121 residues: Small ribosomal subunit protein uS13 (121 aa).

The disordered stretch occupies residues 93–121 (KGLPLRGQKTKTNARTRKGPKKTIANKKK).

Belongs to the universal ribosomal protein uS13 family. As to quaternary structure, part of the 30S ribosomal subunit. Forms a loose heterodimer with protein S19. Forms two bridges to the 50S subunit in the 70S ribosome.

In terms of biological role, located at the top of the head of the 30S subunit, it contacts several helices of the 16S rRNA. In the 70S ribosome it contacts the 23S rRNA (bridge B1a) and protein L5 of the 50S subunit (bridge B1b), connecting the 2 subunits; these bridges are implicated in subunit movement. Contacts the tRNAs in the A and P-sites. The chain is Small ribosomal subunit protein uS13 from Clostridium perfringens (strain ATCC 13124 / DSM 756 / JCM 1290 / NCIMB 6125 / NCTC 8237 / Type A).